The chain runs to 569 residues: Acetate/butyrate--CoA ligase AAE7, peroxisomal (569 aa).

The Microbody targeting signal signature appears at 567–569 (SRL).

Belongs to the ATP-dependent AMP-binding enzyme family. In terms of tissue distribution, expressed in roots, leaves, stems, flowers and developing seeds.

The protein resides in the peroxisome. It carries out the reaction acetate + ATP + CoA = acetyl-CoA + AMP + diphosphate. The enzyme catalyses a medium-chain fatty acid + ATP + CoA = a medium-chain fatty acyl-CoA + AMP + diphosphate. Functionally, peroxisomal acetate/butyrate--CoA ligase that is probably involved in the activation of exogenous acetate for entry into the glyoxylate cycle. May play a role to prevent carbon loss from peroxisomes during lipid mobilization. In vitro, is active with both acetate and butyrate. The protein is Acetate/butyrate--CoA ligase AAE7, peroxisomal (AAE7) of Arabidopsis thaliana (Mouse-ear cress).